A 721-amino-acid polypeptide reads, in one-letter code: Catalase-peroxidase (721 aa).

Residues 89-212 (WHSAGTYRTG…LAAVQMGLIY (124 aa)) constitute a cross-link (tryptophyl-tyrosyl-methioninium (Trp-Tyr) (with M-238)). The Proton acceptor role is filled by His-90. The segment at residues 212-238 (YVNPEGPNGDPDPFAAAVDIRETFARM) is a cross-link (tryptophyl-tyrosyl-methioninium (Tyr-Met) (with W-89)). A heme b-binding site is contributed by His-253.

Belongs to the peroxidase family. Peroxidase/catalase subfamily. In terms of assembly, homodimer or homotetramer. It depends on heme b as a cofactor. Post-translationally, formation of the three residue Trp-Tyr-Met cross-link is important for the catalase, but not the peroxidase activity of the enzyme.

The catalysed reaction is H2O2 + AH2 = A + 2 H2O. The enzyme catalyses 2 H2O2 = O2 + 2 H2O. Its function is as follows. Bifunctional enzyme with both catalase and broad-spectrum peroxidase activity. This is Catalase-peroxidase from Shewanella baltica (strain OS155 / ATCC BAA-1091).